The chain runs to 379 residues: L-lactate dehydrogenase (379 aa).

In terms of domain architecture, FMN hydroxy acid dehydrogenase spans 1 to 379 (MIISSSTDYR…ITSELLVREP (379 aa)). A substrate-binding site is contributed by Y24. 2 residues coordinate FMN: S106 and Q127. Y129 is a binding site for substrate. T155 provides a ligand contact to FMN. Position 164 (R164) interacts with substrate. K251 is an FMN binding site. Residue H275 is the Proton acceptor of the active site. R278 is a binding site for substrate. 306–330 (DSGIRSGLDVVRMIALGADAAMLGR) contacts FMN.

It belongs to the FMN-dependent alpha-hydroxy acid dehydrogenase family. FMN is required as a cofactor.

Its subcellular location is the cell membrane. The catalysed reaction is (S)-lactate + A = pyruvate + AH2. Functionally, catalyzes the conversion of L-lactate to pyruvate. Is coupled to the respiratory chain. The sequence is that of L-lactate dehydrogenase from Alcaligenes faecalis.